A 987-amino-acid chain; its full sequence is Ephrin type-B receptor 2 (987 aa).

The N-terminal stretch at 1–19 (MGPLWFCCLPLALLPLLAA) is a signal peptide. At 20 to 544 (VEETLMDSTT…QTSVQEKLPL (525 aa)) the chain is on the extracellular side. Residues 21–203 (EETLMDSTTA…FYRKCPRVIQ (183 aa)) form the Eph LBD domain. 2 cysteine pairs are disulfide-bonded: C63–C185 and C98–C108. N266, N337, N429, N478, and N483 each carry an N-linked (GlcNAc...) asparagine glycan. Fibronectin type-III domains are found at residues 325–435 (IPSA…TNQA) and 436–531 (APSA…TMTE). The chain crosses the membrane as a helical span at residues 545–565 (IIGSSAAGLVFLIAVVVIIIV). The Cytoplasmic portion of the chain corresponds to 566 to 987 (CNRRGFERAD…QMNQIQSVEV (422 aa)). The Protein kinase domain maps to 622–885 (VKIEQVIGAG…QIVNTLDKMI (264 aa)). Residues 628 to 636 (IGAGEFGEV) and K654 each bind ATP. D747 serves as the catalytic Proton acceptor. Residue K892 forms a Glycyl lysine isopeptide (Lys-Gly) (interchain with G-Cter in ubiquitin) linkage. Residues 914–978 (TSFNTVDEWL…LNSIQVMRAQ (65 aa)) form the SAM domain. A PDZ-binding motif is present at residues 985–987 (VEV).

It belongs to the protein kinase superfamily. Tyr protein kinase family. Ephrin receptor subfamily. As to quaternary structure, heterotetramer upon binding of the ligand. The heterotetramer is composed of an ephrin dimer and a receptor dimer. Oligomerization is probably required to induce biological responses. In terms of processing, ligand binding induces cleavage by matrix metalloproteinases (MMPs) such as MMP7/MMP9, producing an EphB2/N-terminal fragment (NTF) and a C-terminal long fragment (EphB2-LF). EphB2-LF is further cleaved by MMPs, producing EphB2/CTF1 which is further cleaved by the PS1/gamma-secretase producing EphB2/CTF2. Post-translationally, polyubiquitinated; ligand binding stimulates ubiquitination. Ubiquitinated by RNF186 at Lys-892, mainly through 'Lys-27'-linked polyubiquitin chains.

It is found in the cell membrane. It localises to the cell projection. The protein localises to the axon. Its subcellular location is the dendrite. The enzyme catalyses L-tyrosyl-[protein] + ATP = O-phospho-L-tyrosyl-[protein] + ADP + H(+). In terms of biological role, receptor tyrosine kinase which binds promiscuously transmembrane ephrin-B family ligands residing on adjacent cells, leading to contact-dependent bidirectional signaling into neighboring cells. The signaling pathway downstream of the receptor is referred to as forward signaling while the signaling pathway downstream of the ephrin ligand is referred to as reverse signaling. Functions in axon guidance during development. In addition to axon guidance, also regulates dendritic spines development and maturation and stimulates the formation of excitatory synapses. This is Ephrin type-B receptor 2 (EPHB2) from Coturnix japonica (Japanese quail).